The primary structure comprises 346 residues: Anthocyanidin 3-O-glucosyltransferase 2 (346 aa).

Residues A221, Q223, H238, W241, N242, S243, and E246 each coordinate UDP-alpha-D-glucose. A261 serves as a coordination point for an anthocyanidin. Positions 262 and 263 each coordinate UDP-alpha-D-glucose.

The protein belongs to the UDP-glycosyltransferase family. Expressed in cotyledons, roots and leaves.

It carries out the reaction an anthocyanidin + UDP-alpha-D-glucose + H(+) = an anthocyanidin 3-O-beta-D-glucoside + UDP. Its pathway is pigment biosynthesis; anthocyanin biosynthesis. Its function is as follows. In the presence of other necessary color factors, this glycosylation reaction allows the accumulation of anthocyanin pigments. The protein is Anthocyanidin 3-O-glucosyltransferase 2 (GT2) of Manihot esculenta (Cassava).